The sequence spans 60 residues: UPF0434 protein HCH_02705 (60 aa).

Belongs to the UPF0434 family.

The polypeptide is UPF0434 protein HCH_02705 (Hahella chejuensis (strain KCTC 2396)).